A 66-amino-acid polypeptide reads, in one-letter code: Large ribosomal subunit protein bL32 (66 aa).

The protein belongs to the bacterial ribosomal protein bL32 family.

The sequence is that of Large ribosomal subunit protein bL32 from Acetivibrio thermocellus (strain ATCC 27405 / DSM 1237 / JCM 9322 / NBRC 103400 / NCIMB 10682 / NRRL B-4536 / VPI 7372) (Clostridium thermocellum).